A 378-amino-acid chain; its full sequence is Protein arginine N-methyltransferase 6 (378 aa).

The interval 1-46 is disordered; that stretch reads MSLSKKRKLESGDSGGAGAGGEGAEEENGGEQEAAPPRPRRTKSER. Positions 13–22 are enriched in gly residues; it reads DSGGAGAGGE. The residue at position 38 (arginine 38) is an Asymmetric dimethylarginine; by autocatalysis. The 331-residue stretch at 47–377 folds into the SAM-dependent MTase PRMT-type domain; the sequence is DQLYYECYSD…EEKTKDFAME (331 aa). S-adenosyl-L-methionine-binding residues include histidine 60, arginine 69, glycine 93, glutamate 115, and glutamate 144. Catalysis depends on residues glutamate 158 and glutamate 167.

This sequence belongs to the class I-like SAM-binding methyltransferase superfamily. Protein arginine N-methyltransferase family. PRMT6 subfamily. In terms of assembly, interacts with (and methylates) HIV-1 Tat, Rev and Nucleocapsid protein p7 (NC). Interacts with EPB41L3 and NCOA1. Automethylation enhances its stability.

Its subcellular location is the nucleus. The enzyme catalyses L-arginyl-[protein] + 2 S-adenosyl-L-methionine = N(omega),N(omega)-dimethyl-L-arginyl-[protein] + 2 S-adenosyl-L-homocysteine + 2 H(+). Its function is as follows. Arginine methyltransferase that can catalyze the formation of both omega-N monomethylarginine (MMA) and asymmetrical dimethylarginine (aDMA), with a strong preference for the formation of aDMA. Preferentially methylates arginyl residues present in a glycine and arginine-rich domain and displays preference for monomethylated substrates. Specifically mediates the asymmetric dimethylation of histone H3 'Arg-2' to form H3R2me2a. H3R2me2a represents a specific tag for epigenetic transcriptional repression and is mutually exclusive with methylation on histone H3 'Lys-4' (H3K4me2 and H3K4me3). Acts as a transcriptional repressor of various genes such as HOXA2, THBS1 and TP53. Repression of TP53 blocks cellular senescence. Also methylates histone H2A and H4 'Arg-3' (H2AR3me and H4R3me, respectively). Acts as a regulator of DNA base excision during DNA repair by mediating the methylation of DNA polymerase beta (POLB), leading to the stimulation of its polymerase activity by enhancing DNA binding and processivity. Methylates HMGA1. Regulates alternative splicing events. Acts as a transcriptional coactivator of a number of steroid hormone receptors including ESR1, ESR2, PGR and NR3C1. Promotes fasting-induced transcriptional activation of the gluconeogenic program through methylation of the CRTC2 transcription coactivator. Methylates GPS2, protecting GPS2 from ubiquitination and degradation. Methylates SIRT7, inhibiting SIRT7 histone deacetylase activity and promoting mitochondria biogenesis. In Mus musculus (Mouse), this protein is Protein arginine N-methyltransferase 6 (Prmt6).